Reading from the N-terminus, the 375-residue chain is MFEDIQLIYMNIKILRFWALLYDKNLRRYVCIGLASFHIFTQIVYMMSTNEGLTGIIRNSYMLVLWINTVLRAYLLLADHDRYLALIQKLTEAYYDLLNLNDSYISEILDQVNKVGKLMARGNLFFGMLTSMGFGLYPLSSSERVLPFGSKIPGLNEYESPYYEMWYIFQMLITPMGCCMYIPYTSLIVGLIMFGIVRCKALQHRLRQVALKHPYGDRDPRELREEIIACIRYQQSIIEYMDHINELTTMMFLFELMAFSALLCALLFMLIIVSGTSQLIIVCMYINMILAQILALYWYANELREQNLAVATAAYETEWFTFDVPLRKNILFMMMRAQRPAAILLGNIRPITLELFQNLLNTTYTFFTVLKRVYG.

Residues 1 to 28 lie on the Cytoplasmic side of the membrane; sequence MFEDIQLIYMNIKILRFWALLYDKNLRR. The helical transmembrane segment at 29–49 threads the bilayer; sequence YVCIGLASFHIFTQIVYMMST. The Extracellular portion of the chain corresponds to 50-60; it reads NEGLTGIIRNS. Residues 61-77 traverse the membrane as a helical segment; the sequence is YMLVLWINTVLRAYLLL. The Cytoplasmic segment spans residues 78-121; it reads ADHDRYLALIQKLTEAYYDLLNLNDSYISEILDQVNKVGKLMAR. A helical membrane pass occupies residues 122 to 142; that stretch reads GNLFFGMLTSMGFGLYPLSSS. Topologically, residues 143-176 are extracellular; that stretch reads ERVLPFGSKIPGLNEYESPYYEMWYIFQMLITPM. The helical transmembrane segment at 177-197 threads the bilayer; it reads GCCMYIPYTSLIVGLIMFGIV. At 198–251 the chain is on the cytoplasmic side; the sequence is RCKALQHRLRQVALKHPYGDRDPRELREEIIACIRYQQSIIEYMDHINELTTMM. A helical transmembrane segment spans residues 252-272; sequence FLFELMAFSALLCALLFMLII. The Extracellular portion of the chain corresponds to 273 to 278; it reads VSGTSQ. Residues 279–299 traverse the membrane as a helical segment; the sequence is LIIVCMYINMILAQILALYWY. The Cytoplasmic segment spans residues 300–342; sequence ANELREQNLAVATAAYETEWFTFDVPLRKNILFMMMRAQRPAA. A helical membrane pass occupies residues 343–363; it reads ILLGNIRPITLELFQNLLNTT. The Extracellular segment spans residues 364-375; sequence YTFFTVLKRVYG.

Belongs to the insect chemoreceptor superfamily. Heteromeric odorant receptor channel (TC 1.A.69) family. Or30a subfamily. Interacts with Orco. Complexes exist early in the endomembrane system in olfactory sensory neurons (OSNs), coupling these complexes to the conserved ciliary trafficking pathway. As to expression, expressed in olfactory sensory neurons in the antenna.

It is found in the cell membrane. Functionally, odorant receptor which mediates acceptance or avoidance behavior, depending on its substrates. The odorant receptor repertoire encodes a large collection of odor stimuli that vary widely in identity, intensity, and duration. May form a complex with Orco to form odorant-sensing units, providing sensitive and prolonged odorant signaling and calcium permeability. In Drosophila melanogaster (Fruit fly), this protein is Odorant receptor 49b (Or49b).